The following is a 948-amino-acid chain: ELKS/Rab6-interacting/CAST family member 1 (948 aa).

The interval 1-54 (MYGSARSVGKVEPSSQSPGRSPRLPRSPRLGHRRTNSTGGSSGNSVGGGSGKTL) is disordered. An N6-acetyllysine modification is found at K10. Low complexity predominate over residues 13–28 (PSSQSPGRSPRLPRSP). A phosphoserine mark is found at S17, S21, and S37. Residue T38 is modified to Phosphothreonine. Residues 40–51 (GSSGNSVGGGSG) show a composition bias toward gly residues. 5 positions are modified to phosphoserine: S55, S75, S94, S796, and S937. The stretch at 144 to 920 (RQARDNTIMD…RMKLMADNYE (777 aa)) forms a coiled coil. Basic and acidic residues predominate over residues 773–796 (KHKEQVEKKKSAQMLEEARRREDS). Disordered regions lie at residues 773 to 801 (KHKEQVEKKKSAQMLEEARRREDSLSDSS) and 903 to 948 (QLKQ…GIWA). Residues 939-948 (DQDEEEGIWA) show a composition bias toward acidic residues.

Interacts with the GTB-bound forms of RAB6A isoform 1 and isoform 2 and with RAB6B. The interaction was strongest with RAB6B, followed by RAB6A isoform 2 and weakest with RAB6A isoform 1. Part of a complex with CHUK, IKBKB and IKBKG. Interacts with CHUK, IKBKB and IKBKG. The interaction with IKBKG is independent of CHUK and IKBKB. Interacts with NFKBIA. Isoform 1 interacts through its C-terminus with the PDZ domains of RIMS1 and RIMS2. Interacts with ERC2/CAST1. Interacts with SDCCAG8. Part of a cortical microtubule stabilization complex (CMSC) composed of KANK1, PPFIA1, PPFIBP1, ERC1/ELKS, PHLDB2/LL5beta, CLASPs, KIF21A and possibly additional interactors; within CMSCs KANK1 and PHLDB2/LL5beta appear to be the core components for targeting of microtubule-binding proteins KIF21A and CLASPs, whereas PPFIA1, PPFIBP1 and ERC1/ELKS serve as scaffolds for protein clustering. In terms of tissue distribution, isoform 1 is specifically expressed in brain. A further probable isoform is widely expressed outside of brain It is referred to as ERC1a by PubMed:12391317 and characterized by a C-terminus identical to that of isoforms 1 in human and mouse.

It localises to the cytoplasm. The protein localises to the cytoskeleton. The protein resides in the microtubule organizing center. Its subcellular location is the centrosome. It is found in the membrane. It localises to the golgi apparatus membrane. The protein localises to the presynaptic active zone. The protein resides in the cell projection. Its subcellular location is the podosome. Functionally, regulatory subunit of the IKK complex. Probably recruits IkappaBalpha/NFKBIA to the complex. May be involved in the organization of the cytomatrix at the nerve terminals active zone (CAZ) which regulates neurotransmitter release. May be involved in vesicle trafficking at the CAZ. May be involved in Rab-6 regulated endosomes to Golgi transport. This Rattus norvegicus (Rat) protein is ELKS/Rab6-interacting/CAST family member 1 (Erc1).